The chain runs to 311 residues: Ornithine carbamoyltransferase (311 aa).

Residues 54 to 58 (STRTR), N81, R104, and 131 to 134 (HPCQ) each bind carbamoyl phosphate. L-ornithine contacts are provided by residues N164, D225, and 229–230 (DM). Carbamoyl phosphate is bound by residues 268–271 (HDMP), T279, and R297.

Belongs to the aspartate/ornithine carbamoyltransferase superfamily. OTCase family.

It is found in the cytoplasm. It carries out the reaction carbamoyl phosphate + L-ornithine = L-citrulline + phosphate + H(+). The protein operates within amino-acid biosynthesis; L-arginine biosynthesis; L-arginine from L-ornithine and carbamoyl phosphate: step 1/3. In terms of biological role, reversibly catalyzes the transfer of the carbamoyl group from carbamoyl phosphate (CP) to the N(epsilon) atom of ornithine (ORN) to produce L-citrulline. In Leptospira interrogans serogroup Icterohaemorrhagiae serovar copenhageni (strain Fiocruz L1-130), this protein is Ornithine carbamoyltransferase (argF).